An 867-amino-acid chain; its full sequence is Leucine--tRNA ligase (867 aa).

The 'HIGH' region motif lies at 42–52 (PYPSGKLHMGH). The short motif at 631 to 635 (KMSKS) is the 'KMSKS' region element. Lysine 634 serves as a coordination point for ATP.

The protein belongs to the class-I aminoacyl-tRNA synthetase family.

The protein resides in the cytoplasm. It carries out the reaction tRNA(Leu) + L-leucine + ATP = L-leucyl-tRNA(Leu) + AMP + diphosphate. This Dichelobacter nodosus (strain VCS1703A) protein is Leucine--tRNA ligase.